A 97-amino-acid chain; its full sequence is uncharacterized protein (97 aa).

In terms of domain architecture, Stress-response A/B barrel spans 2–95; that stretch reads IRHLVLFKLN…EFATWVIADY (94 aa).

This is an uncharacterized protein from Streptomyces coelicolor (strain ATCC BAA-471 / A3(2) / M145).